The chain runs to 329 residues: Phosphatidylcholine:ceramide cholinephosphotransferase 3 (329 aa).

Topologically, residues 1 to 26 are cytoplasmic; sequence MAVPPVEMYSGSFWNRMRKPLPLRTQ. The helical transmembrane segment at 27–47 threads the bilayer; it reads VIRFTVVFVIVSFILAVALQI. Over 48–74 the chain is Extracellular; it reads THERMPDPKVTKPLPDLGFELLTKVPG. A helical transmembrane segment spans residues 75–95; that stretch reads MYVLADCCIGFLNILSVFTAF. The Cytoplasmic segment spans residues 96–147; that stretch reads KLYLLHRHCVGSGEPELPCNIPGVSRFFLSVWLCKENCRIELRNIHTIAWIR. Residues 148 to 168 form a helical membrane-spanning segment; sequence FITSYALLLLFRSAVIVMTSL. Residues 169 to 211 lie on the Extracellular side of the membrane; the sequence is PAPDDLCQNPPKIENPVKNVILTVLTAGAGSIHCGDLMYSGHT. Residues 212-232 traverse the membrane as a helical segment; it reads VILTLHLMFHWIYGAMVHWSF. Arginine 233 is a topological domain (cytoplasmic). Residues 234-254 form a helical membrane-spanning segment; sequence PVVTVVAIFGYYCIVASRFHY. Over 255–257 the chain is Extracellular; the sequence is TDD. A helical transmembrane segment spans residues 258-278; the sequence is VLVAIYLTIATFIAVGHNADG. The Cytoplasmic segment spans residues 279-329; sequence APWQLQLFIRWWPCCGANSREVTEDSQPVMVAFKSEAAGQSSRKVVDERNH.

The protein belongs to the sphingomyelin synthase family.

The protein localises to the membrane. It catalyses the reaction an N-acylsphing-4-enine + a 1,2-diacyl-sn-glycero-3-phosphocholine = a sphingomyelin + a 1,2-diacyl-sn-glycerol. The enzyme catalyses an N-acylsphinganine + a 1,2-diacyl-sn-glycero-3-phosphocholine = an N-acylsphinganine-1-phosphocholine + a 1,2-diacyl-sn-glycerol. The catalysed reaction is an N-acylsphing-4-enine + a 1,2-diacyl-sn-glycero-3-phosphoethanolamine = an N-acylsphing-4-enine 1-phosphoethanolamine + a 1,2-diacyl-sn-glycerol. It carries out the reaction an N-acylsphinganine + a 1,2-diacyl-sn-glycero-3-phosphoethanolamine = an N-acylsphinganine-1-phosphoethanolamine + a 1,2-diacyl-sn-glycerol. In terms of biological role, bifunctional sphingomyelin (SM)/ethanolamine phosphorylceramide (EPC) synthase with minimal inositol phosphorylceramide (IPC) synthase activity. Specificity is likely to be defined by residues in the lumenal catalytic domain that interact with the polar head groups of the phospholipid donors. SM is synthesized by both stages of the parasite life cycle, bloodstream forms (BSF) and procyclic forms (PCF), by transferring the phosphocholine from a 1,2-diacyl-sn-glycero-3-phosphocholine to an N-acylsphing-4-enine (ceramide) or an N-acylsphinganine (dihydroceramide). Similarly, EPC is synthesized by transferring phosphoethanolamine from a 1,2-diacyl-sn-glycero-3-phosphoethanolamine to ceramide or dihydroceramide by BSF and PCF, while IPC is confined to PCF. The ceramide/dihydroceramide ratios are skewed towards dihydroceramide in PCF parasites and ceramide in BSF parasites, this is likely due to differential expression and/or regulation of dihydroceramide desaturase, the enzyme responsible for converting dihydroceramide to ceramide. This Trypanosoma brucei brucei protein is Phosphatidylcholine:ceramide cholinephosphotransferase 3.